A 518-amino-acid polypeptide reads, in one-letter code: Glutamate--cysteine ligase (518 aa).

Belongs to the glutamate--cysteine ligase type 1 family. Type 1 subfamily.

It carries out the reaction L-cysteine + L-glutamate + ATP = gamma-L-glutamyl-L-cysteine + ADP + phosphate + H(+). It functions in the pathway sulfur metabolism; glutathione biosynthesis; glutathione from L-cysteine and L-glutamate: step 1/2. This chain is Glutamate--cysteine ligase, found in Klebsiella pneumoniae (strain 342).